The following is a 200-amino-acid chain: dITP/XTP pyrophosphatase (200 aa).

8 to 13 provides a ligand contact to substrate; it reads TRNAGK. The active-site Proton acceptor is the Asp72. Position 72 (Asp72) interacts with Mg(2+). Residues Ser73, 155–158, Lys178, and 183–184 contribute to the substrate site; these read FGYD and HR.

Belongs to the HAM1 NTPase family. In terms of assembly, homodimer. Mg(2+) is required as a cofactor.

It carries out the reaction XTP + H2O = XMP + diphosphate + H(+). The enzyme catalyses dITP + H2O = dIMP + diphosphate + H(+). It catalyses the reaction ITP + H2O = IMP + diphosphate + H(+). Pyrophosphatase that catalyzes the hydrolysis of nucleoside triphosphates to their monophosphate derivatives, with a high preference for the non-canonical purine nucleotides XTP (xanthosine triphosphate), dITP (deoxyinosine triphosphate) and ITP. Seems to function as a house-cleaning enzyme that removes non-canonical purine nucleotides from the nucleotide pool, thus preventing their incorporation into DNA/RNA and avoiding chromosomal lesions. This Streptomyces coelicolor (strain ATCC BAA-471 / A3(2) / M145) protein is dITP/XTP pyrophosphatase.